Reading from the N-terminus, the 429-residue chain is Serine hydroxymethyltransferase (429 aa).

Residues L126 and 130–132 (GHL) contribute to the (6S)-5,6,7,8-tetrahydrofolate site. At K235 the chain carries N6-(pyridoxal phosphate)lysine. Residue 359-361 (SPF) participates in (6S)-5,6,7,8-tetrahydrofolate binding.

This sequence belongs to the SHMT family. Homodimer. It depends on pyridoxal 5'-phosphate as a cofactor.

The protein localises to the cytoplasm. It carries out the reaction (6R)-5,10-methylene-5,6,7,8-tetrahydrofolate + glycine + H2O = (6S)-5,6,7,8-tetrahydrofolate + L-serine. Its pathway is one-carbon metabolism; tetrahydrofolate interconversion. The protein operates within amino-acid biosynthesis; glycine biosynthesis; glycine from L-serine: step 1/1. In terms of biological role, catalyzes the reversible interconversion of serine and glycine with tetrahydrofolate (THF) serving as the one-carbon carrier. This reaction serves as the major source of one-carbon groups required for the biosynthesis of purines, thymidylate, methionine, and other important biomolecules. Also exhibits THF-independent aldolase activity toward beta-hydroxyamino acids, producing glycine and aldehydes, via a retro-aldol mechanism. This chain is Serine hydroxymethyltransferase, found in Prochlorococcus marinus (strain MIT 9313).